Reading from the N-terminus, the 79-residue chain is Peptide Im-5 (79 aa).

Positions 1–23 (MKYRKQLLVLFFAYFLVVNESEA) are cleaved as a signal peptide. A propeptide spanning residues 49–79 (RALMKRDLQDRMDPYQRNLKLDRYLKQLALD) is cleaved from the precursor.

The protein belongs to the non-disulfide-bridged peptide (NDBP) superfamily. Medium-length antimicrobial peptide (group 3) family. As to expression, expressed by the venom gland.

It is found in the secreted. Its subcellular location is the target cell membrane. Its function is as follows. Antimicrobial peptide that may act by disrupting the integrity of the bacterial cell membrane. Has antibacterial activity against Gram-negative bacterium E.coli NBRC 3972 (MIC=10 uM) and against Gram-positive bacteria S.aureus NBRC 13276 (MIC=2.5-5 uM) and B.subtilis NBRC 3009 (MIC=0.5-1 uM). Also shows potent activity against antibiotic-sensitive and -resistant Acinetobacter baumannii (MIC=1.8-3.6 uM). Shows cytolytic activity against human and sheep erythrocytes. Toxic to cricket A.domestica. The polypeptide is Peptide Im-5 (Isometrus maculatus (Lesser brown scorpion)).